Consider the following 144-residue polypeptide: Small ribosomal subunit protein bS6 (144 aa).

The tract at residues 97–144 is disordered; the sequence is DTEQSLIMKSKDEKGDKPERSERRRRDDEEVDAAPAATDTDGDNAEAA. The span at 105–124 shows a compositional bias: basic and acidic residues; sequence KSKDEKGDKPERSERRRRDD.

The protein belongs to the bacterial ribosomal protein bS6 family.

In terms of biological role, binds together with bS18 to 16S ribosomal RNA. The protein is Small ribosomal subunit protein bS6 of Xanthomonas campestris pv. campestris (strain B100).